The primary structure comprises 642 residues: MPVITLPDGSKREFATPVSTLDVAADIGPGLAKACIAGRVNGELKDACDIIDTDSELSIITAKDEEGVEILRHSCAHLLGHAFKQLWPEAKMAIGPVIDNGFYYDIDLDHKLTQEDIDALEKRMVQLAKTNYIVEKRVGSWQVARDTFEARGETYKMEILDENISKDDQPALYHHEEYVDMCRGPHVPNMKFCQHFKLMSVAGAYWRGNSDNKMLQRVYGTAWADKKALKVHLNRLEEAAKRDHRKIGKQLDLYHMQEEAPGMVFWHNDGWSLFLELEKFIRQKLGQYTYQEVKGPLMMDRVLWERSGHWDKYSEAMFTTNSENREYAIKPMNCPGHVQIFNQGLKSYRDLPLRMAEFGCCHRNEPSGSLHGLMRVRGFTQDDAHVFCTEDQVQQEVSACIKMVYDTYETFGFKDIVVKLSTRPEKRIGDDDMWDRAEEALKQALTANDIAYEILPGEGAFYGPKIEFTLHDCLDRAWQCGTVQLDYALPGRLGATYVAEDNSRQTPVMIHRAILGSLERFLGILIEEYAGKFPTWLAPMQAVVMNITDKQSDYVDEVVNILKENGIRASKDLRNEKIGFKIREHTLRRVPYLLVVGDQEMENKEVAVRTRDGVDLGKIQISEFASKIKEQISLRSLNLLEE.

The TGS domain maps to 1–61 (MPVITLPDGS…DTDSELSIIT (61 aa)). Residues 243–534 (DHRKIGKQLD…LIEEYAGKFP (292 aa)) form a catalytic region. Residues cysteine 334, histidine 385, and histidine 511 each coordinate Zn(2+).

It belongs to the class-II aminoacyl-tRNA synthetase family. As to quaternary structure, homodimer. Requires Zn(2+) as cofactor.

Its subcellular location is the cytoplasm. It carries out the reaction tRNA(Thr) + L-threonine + ATP = L-threonyl-tRNA(Thr) + AMP + diphosphate + H(+). Catalyzes the attachment of threonine to tRNA(Thr) in a two-step reaction: L-threonine is first activated by ATP to form Thr-AMP and then transferred to the acceptor end of tRNA(Thr). Also edits incorrectly charged L-seryl-tRNA(Thr). The chain is Threonine--tRNA ligase from Shewanella woodyi (strain ATCC 51908 / MS32).